The primary structure comprises 319 residues: Methionyl-tRNA formyltransferase (319 aa).

116–119 (SLLP) is a (6S)-5,6,7,8-tetrahydrofolate binding site.

Belongs to the Fmt family.

It carries out the reaction L-methionyl-tRNA(fMet) + (6R)-10-formyltetrahydrofolate = N-formyl-L-methionyl-tRNA(fMet) + (6S)-5,6,7,8-tetrahydrofolate + H(+). In terms of biological role, attaches a formyl group to the free amino group of methionyl-tRNA(fMet). The formyl group appears to play a dual role in the initiator identity of N-formylmethionyl-tRNA by promoting its recognition by IF2 and preventing the misappropriation of this tRNA by the elongation apparatus. The protein is Methionyl-tRNA formyltransferase of Chlorobium phaeovibrioides (strain DSM 265 / 1930) (Prosthecochloris vibrioformis (strain DSM 265)).